The following is a 449-amino-acid chain: Glycine receptor subunit alpha-2 (449 aa).

An N-terminal signal peptide occupies residues 1 to 27 (MTRPSVKLLTTLLACLMEMLNFRVSSG). Residues 28 to 255 (KDPDLLSSSS…FHLERQMGYY (228 aa)) are Extracellular-facing. Asparagine 70 is a glycosylation site (N-linked (GlcNAc...) asparagine). Glycine contacts are provided by arginine 97 and serine 161. Arginine 97 contacts strychnine. Residues cysteine 170 and cysteine 184 are joined by a disulfide bond. Glutamate 224 and aspartate 226 together coordinate Zn(2+). Cysteine 230 and cysteine 241 form a disulfide bridge. Threonine 236 is a binding site for glycine. Histidine 247 contributes to the Zn(2+) binding site. Residues 256–276 (LIQMYIPSLLIVILSWVSFWI) traverse the membrane as a helical segment. The Cytoplasmic segment spans residues 277 to 282 (NMDAAP). The helical transmembrane segment at 283-302 (ARVALGITTVLTMTTQSSGS) threads the bilayer. Residues 303–313 (RASLPKVSYVK) are Extracellular-facing. Residues 314–334 (AIDIWMAVCLLFVFAALLEYA) form a helical membrane-spanning segment. Residues 335-420 (GVNFVSRQQK…RAKRIDTISR (86 aa)) are Cytoplasmic-facing. Residues 421 to 441 (AAFPLAFLIFNVFYWITYKII) traverse the membrane as a helical segment. Residues 442–449 (RHESARKD) are Extracellular-facing.

This sequence belongs to the ligand-gated ion channel (TC 1.A.9) family.

The protein localises to the postsynaptic cell membrane. It is found in the synapse. Its subcellular location is the cell membrane. It localises to the cell projection. It catalyses the reaction chloride(in) = chloride(out). With respect to regulation, channel opening is triggered by extracellular glycine. Channel opening is also triggered by taurine and beta-alanine. Inhibited by strychnine. Its function is as follows. Subunit of heteromeric glycine-gated chloride channels. Plays a role in synaptic plasticity. Contributes to the generation of inhibitory postsynaptic currents, and is involved in the down-regulation of neuronal excitability. The polypeptide is Glycine receptor subunit alpha-2 (glra2) (Danio rerio (Zebrafish)).